The sequence spans 335 residues: NADH-quinone oxidoreductase subunit H (335 aa).

The next 8 helical transmembrane spans lie at 11–31 (VILTVLRAIVVLLAVVVCGAL), 81–101 (VIFTLAPVVAMSALLIAFVVI), 114–134 (IGLLFFFAMAGLSVYAVLFAG), 154–174 (VSYEVFLGLALMGVVVQVGSF), 187–207 (LWFIIPQFFGFCTFFIAGVAV), 238–258 (FFVGEYIGIILISALLVTLFF), 270–290 (QLSFLWFALKTAFFIMLFILL), and 307–327 (WKFCLPLTLINLLVTAAIVLY).

This sequence belongs to the complex I subunit 1 family. In terms of assembly, NDH-1 is composed of 13 different subunits. Subunits NuoA, H, J, K, L, M, N constitute the membrane sector of the complex.

It localises to the cell inner membrane. The enzyme catalyses a quinone + NADH + 5 H(+)(in) = a quinol + NAD(+) + 4 H(+)(out). Functionally, NDH-1 shuttles electrons from NADH, via FMN and iron-sulfur (Fe-S) centers, to quinones in the respiratory chain. The immediate electron acceptor for the enzyme in this species is believed to be ubiquinone. Couples the redox reaction to proton translocation (for every two electrons transferred, four hydrogen ions are translocated across the cytoplasmic membrane), and thus conserves the redox energy in a proton gradient. This subunit may bind ubiquinone. This is NADH-quinone oxidoreductase subunit H from Pseudomonas putida (strain ATCC 700007 / DSM 6899 / JCM 31910 / BCRC 17059 / LMG 24140 / F1).